The primary structure comprises 365 residues: Gibberellin 20 oxidase 1-A (365 aa).

The Fe2OG dioxygenase domain maps to 199–299 (GNDSIMRLNY…RKSLAFFLCP (101 aa)). Positions 224, 226, and 280 each coordinate Fe cation. Arg-290 is a catalytic residue.

Belongs to the iron/ascorbate-dependent oxidoreductase family. GA20OX subfamily. It depends on Fe cation as a cofactor. L-ascorbate is required as a cofactor. In terms of tissue distribution, expressed in nodes and the ear of the elongating stem.

The enzyme catalyses gibberellin A12 + 2 2-oxoglutarate + 3 O2 + H(+) = gibberellin A9 + 2 succinate + 3 CO2 + 2 H2O. It carries out the reaction gibberellin A53 + 2 2-oxoglutarate + 3 O2 + H(+) = gibberellin A20 + 2 succinate + 3 CO2 + 2 H2O. Key oxidase enzyme in the biosynthesis of gibberellin that catalyzes the conversion of GA12 and GA53 to GA9 and GA20 respectively, via a three-step oxidation at C-20 of the GA skeleton. This is Gibberellin 20 oxidase 1-A (GA20ox1A) from Triticum aestivum (Wheat).